A 734-amino-acid polypeptide reads, in one-letter code: Photosystem I P700 chlorophyll a apoprotein A2 (734 aa).

8 helical membrane-spanning segments follow: residues 46–69, 135–158, 175–199, 273–291, 330–353, 369–395, 417–439, and 517–535; these read IFASHFGQLAIIFLWTSGNLFHVA, LYTGALFLLFLSAISLIGGWLHLQ, LNHHLSGLFGVSSLAWTGHLVHVAI, MAHHHLAIAFIFLIAGHMY, LHFQLGLALACLGVITSLVAQHMY, AASYTHHQYIAGFIMTGAFAHGAIFFI, AIISHLSWASLFLGFHTLGLYVH, and FLVHHAIALGLHTTTLILV. Residues cysteine 559 and cysteine 568 each contribute to the [4Fe-4S] cluster site. 2 helical membrane-spanning segments follow: residues 575-596 and 643-665; these read AFYLAVFWMLNTIGWVTFYWHW and LSVWAWMFLFGHLVWATGFMFLI. Chlorophyll a is bound by residues histidine 654, methionine 662, and tyrosine 670. Tryptophan 671 is a binding site for phylloquinone. The helical transmembrane segment at 707–727 threads the bilayer; sequence LVGLAHFSVGYIFTYAAFLIA.

This sequence belongs to the PsaA/PsaB family. The PsaA/B heterodimer binds the P700 chlorophyll special pair and subsequent electron acceptors. PSI consists of a core antenna complex that captures photons, and an electron transfer chain that converts photonic excitation into a charge separation. The eukaryotic PSI reaction center is composed of at least 11 subunits. P700 is a chlorophyll a/chlorophyll a' dimer, A0 is one or more chlorophyll a, A1 is one or both phylloquinones and FX is a shared 4Fe-4S iron-sulfur center. serves as cofactor.

It is found in the plastid. The protein localises to the chloroplast thylakoid membrane. It carries out the reaction reduced [plastocyanin] + hnu + oxidized [2Fe-2S]-[ferredoxin] = oxidized [plastocyanin] + reduced [2Fe-2S]-[ferredoxin]. In terms of biological role, psaA and PsaB bind P700, the primary electron donor of photosystem I (PSI), as well as the electron acceptors A0, A1 and FX. PSI is a plastocyanin-ferredoxin oxidoreductase, converting photonic excitation into a charge separation, which transfers an electron from the donor P700 chlorophyll pair to the spectroscopically characterized acceptors A0, A1, FX, FA and FB in turn. Oxidized P700 is reduced on the lumenal side of the thylakoid membrane by plastocyanin. In Acorus calamus (Sweet flag), this protein is Photosystem I P700 chlorophyll a apoprotein A2.